A 67-amino-acid chain; its full sequence is uncharacterized protein (67 aa).

2 helical membrane passes run 13–32 and 42–64; these read IACL…GFIV and RLTN…TLGL.

It localises to the membrane. This is an uncharacterized protein from Saccharomyces cerevisiae (strain ATCC 204508 / S288c) (Baker's yeast).